Here is a 1113-residue protein sequence, read N- to C-terminus: Protein MGA2 (1113 aa).

The disordered stretch occupies residues 91 to 114 (TPLEEEMESNRALKEEEEDEHENK). Ser255 carries the post-translational modification Phosphoserine. Composition is skewed to polar residues over residues 344–357 (DTTKFNNTTTSSRR) and 437–452 (HIPSPTSMSEEGSESF). Disordered regions lie at residues 344–376 (DTTKFNNTTTSSRRQLTEEESTTEYYSTDNNQL) and 437–462 (HIPSPTSMSEEGSESFNYHHRDNDNP). A Phosphoserine modification is found at Ser467. Residues 530–610 (PSINRVIPSQ…NENNNDDLPQ (81 aa)) form the IPT/TIG domain. Positions 658–687 (IVGNDSPDSGTNGNSCSKSTGPSPNQHSMN) are disordered. The span at 663–687 (SPDSGTNGNSCSKSTGPSPNQHSMN) shows a compositional bias: polar residues. ANK repeat units lie at residues 719–748 (LGRTLLHLACLKNYSSLVYTLIKKGARVND) and 752–781 (FGLTPLHFACISGDPKIIKMLLNCKVNYSL). Residues 1037-1054 (MLIFFWIPLTLLLLTWFI) traverse the membrane as a helical segment.

Its subcellular location is the membrane. The protein is Protein MGA2 (MGA2) of Saccharomyces cerevisiae (strain ATCC 204508 / S288c) (Baker's yeast).